The primary structure comprises 367 residues: Glutamate 5-kinase (367 aa).

Position 10 (K10) interacts with ATP. 3 residues coordinate substrate: S50, D137, and N149. ATP is bound by residues 169-170 and 211-217; these read TD and TGGMATK. Positions 275 to 353 constitute a PUA domain; that stretch reads AGELVVDDGA…QQIGEILGYE (79 aa).

This sequence belongs to the glutamate 5-kinase family.

It is found in the cytoplasm. The catalysed reaction is L-glutamate + ATP = L-glutamyl 5-phosphate + ADP. The protein operates within amino-acid biosynthesis; L-proline biosynthesis; L-glutamate 5-semialdehyde from L-glutamate: step 1/2. In terms of biological role, catalyzes the transfer of a phosphate group to glutamate to form L-glutamate 5-phosphate. This Erwinia tasmaniensis (strain DSM 17950 / CFBP 7177 / CIP 109463 / NCPPB 4357 / Et1/99) protein is Glutamate 5-kinase.